Reading from the N-terminus, the 103-residue chain is Large ribosomal subunit protein bL21 (103 aa).

The protein belongs to the bacterial ribosomal protein bL21 family. In terms of assembly, part of the 50S ribosomal subunit. Contacts protein L20.

Functionally, this protein binds to 23S rRNA in the presence of protein L20. The polypeptide is Large ribosomal subunit protein bL21 (Escherichia coli O127:H6 (strain E2348/69 / EPEC)).